The chain runs to 292 residues: Ribosomal protein L11 methyltransferase (292 aa).

S-adenosyl-L-methionine contacts are provided by Thr-145, Gly-166, Asp-188, and Asn-229.

Belongs to the methyltransferase superfamily. PrmA family.

Its subcellular location is the cytoplasm. It carries out the reaction L-lysyl-[protein] + 3 S-adenosyl-L-methionine = N(6),N(6),N(6)-trimethyl-L-lysyl-[protein] + 3 S-adenosyl-L-homocysteine + 3 H(+). Its function is as follows. Methylates ribosomal protein L11. The polypeptide is Ribosomal protein L11 methyltransferase (Pseudoalteromonas atlantica (strain T6c / ATCC BAA-1087)).